A 308-amino-acid chain; its full sequence is 4-hydroxy-3-methylbut-2-enyl diphosphate reductase (308 aa).

Residue Cys-12 coordinates [4Fe-4S] cluster. Residues His-43 and His-77 each contribute to the (2E)-4-hydroxy-3-methylbut-2-enyl diphosphate site. Dimethylallyl diphosphate-binding residues include His-43 and His-77. Residues His-43 and His-77 each contribute to the isopentenyl diphosphate site. Residue Cys-99 participates in [4Fe-4S] cluster binding. Position 127 (His-127) interacts with (2E)-4-hydroxy-3-methylbut-2-enyl diphosphate. His-127 is a dimethylallyl diphosphate binding site. His-127 serves as a coordination point for isopentenyl diphosphate. Glu-129 acts as the Proton donor in catalysis. Thr-167 contributes to the (2E)-4-hydroxy-3-methylbut-2-enyl diphosphate binding site. Position 197 (Cys-197) interacts with [4Fe-4S] cluster. (2E)-4-hydroxy-3-methylbut-2-enyl diphosphate contacts are provided by Ser-225, Ser-226, Asn-227, and Ser-269. The dimethylallyl diphosphate site is built by Ser-225, Ser-226, Asn-227, and Ser-269. The isopentenyl diphosphate site is built by Ser-225, Ser-226, Asn-227, and Ser-269.

It belongs to the IspH family. It depends on [4Fe-4S] cluster as a cofactor.

The enzyme catalyses isopentenyl diphosphate + 2 oxidized [2Fe-2S]-[ferredoxin] + H2O = (2E)-4-hydroxy-3-methylbut-2-enyl diphosphate + 2 reduced [2Fe-2S]-[ferredoxin] + 2 H(+). It catalyses the reaction dimethylallyl diphosphate + 2 oxidized [2Fe-2S]-[ferredoxin] + H2O = (2E)-4-hydroxy-3-methylbut-2-enyl diphosphate + 2 reduced [2Fe-2S]-[ferredoxin] + 2 H(+). It functions in the pathway isoprenoid biosynthesis; dimethylallyl diphosphate biosynthesis; dimethylallyl diphosphate from (2E)-4-hydroxy-3-methylbutenyl diphosphate: step 1/1. It participates in isoprenoid biosynthesis; isopentenyl diphosphate biosynthesis via DXP pathway; isopentenyl diphosphate from 1-deoxy-D-xylulose 5-phosphate: step 6/6. In terms of biological role, catalyzes the conversion of 1-hydroxy-2-methyl-2-(E)-butenyl 4-diphosphate (HMBPP) into a mixture of isopentenyl diphosphate (IPP) and dimethylallyl diphosphate (DMAPP). Acts in the terminal step of the DOXP/MEP pathway for isoprenoid precursor biosynthesis. This Wolbachia pipientis subsp. Culex pipiens (strain wPip) protein is 4-hydroxy-3-methylbut-2-enyl diphosphate reductase.